A 247-amino-acid polypeptide reads, in one-letter code: Segregation and condensation protein A (247 aa).

It belongs to the ScpA family. In terms of assembly, component of a cohesin-like complex composed of ScpA, ScpB and the Smc homodimer, in which ScpA and ScpB bind to the head domain of Smc. The presence of the three proteins is required for the association of the complex with DNA.

It is found in the cytoplasm. In terms of biological role, participates in chromosomal partition during cell division. May act via the formation of a condensin-like complex containing Smc and ScpB that pull DNA away from mid-cell into both cell halves. This is Segregation and condensation protein A from Bacillus cereus (strain ATCC 10987 / NRS 248).